The following is a 328-amino-acid chain: Phenylalanine--tRNA ligase alpha subunit (328 aa).

Glu-253 contributes to the Mg(2+) binding site.

The protein belongs to the class-II aminoacyl-tRNA synthetase family. Phe-tRNA synthetase alpha subunit type 1 subfamily. As to quaternary structure, tetramer of two alpha and two beta subunits. Mg(2+) serves as cofactor.

It localises to the cytoplasm. The catalysed reaction is tRNA(Phe) + L-phenylalanine + ATP = L-phenylalanyl-tRNA(Phe) + AMP + diphosphate + H(+). The sequence is that of Phenylalanine--tRNA ligase alpha subunit from Actinobacillus pleuropneumoniae serotype 5b (strain L20).